A 981-amino-acid polypeptide reads, in one-letter code: Serine/threonine-protein kinase D1044.8 (981 aa).

The Protein kinase domain maps to 453–725 (YELLDQLGAG…MCGVRLLEYL (273 aa)). ATP contacts are provided by residues 459 to 467 (LGAGAFGCV) and K488. Residue D591 is the Proton acceptor of the active site. Over residues 735 to 746 (TSDMTASQSSYN) the composition is skewed to polar residues. Disordered regions lie at residues 735 to 802 (TSDM…PSSI) and 823 to 847 (IPSR…TELK). Residues 752–762 (SPSSLNSSTSS) are compositionally biased toward low complexity. Polar residues predominate over residues 830-847 (QTCSTEHPARSSSSTELK).

Belongs to the protein kinase superfamily. NEK Ser/Thr protein kinase family. NIMA subfamily. Requires Mg(2+) as cofactor.

The enzyme catalyses L-seryl-[protein] + ATP = O-phospho-L-seryl-[protein] + ADP + H(+). It catalyses the reaction L-threonyl-[protein] + ATP = O-phospho-L-threonyl-[protein] + ADP + H(+). This Caenorhabditis elegans protein is Serine/threonine-protein kinase D1044.8 (nekl-4).